The primary structure comprises 340 residues: 4-dimethylallyltryptophan N-methyltransferase ifgB (340 aa).

It belongs to the methyltransferase superfamily. Homodimer.

The enzyme catalyses 4-(3-methylbut-2-enyl)-L-tryptophan + S-adenosyl-L-methionine = 4-(3-methylbut-2-enyl)-L-abrine + S-adenosyl-L-homocysteine + H(+). It functions in the pathway alkaloid biosynthesis; ergot alkaloid biosynthesis. 4-dimethylallyltryptophan N-methyltransferase; part of the gene cluster that mediates the biosynthesis of isofumigaclavines, fungal ergot alkaloids. The tryptophan dimethylallyltransferase ifgA catalyzes the first step of ergot alkaloid biosynthesis by condensing dimethylallyl diphosphate (DMAP) and tryptophan to form 4-dimethylallyl-L-tryptophan. The second step is catalyzed by the methyltransferase ifgB that methylates 4-dimethylallyl-L-tryptophan in the presence of S-adenosyl-L-methionine, resulting in the formation of N-methyl-dimethylallyl-L-tryptophan. The catalase ifgD and the FAD-dependent oxidoreductase ifgC then transform N-methyl-dimethylallyl-L-tryptophan to chanoclavine-I which is further oxidized by ifgE in the presence of NAD(+), resulting in the formation of chanoclavine-I aldehyde. The chanoclavine-I aldehyde reductases ifgG and/or fgaOx3 reduce chanoclavine-I aldehyde to dihydrochanoclavine-I aldehyde that spontaneously dehydrates to form 6,8-dimethyl-6,7-didehydroergoline. The festuclavine dehydrogenases ifgF1 and/or ifgF2 then catalyze the reduction of 6,8-dimethyl-6,7-didehydroergoline to form festuclavine. Hydrolysis of festuclavine by a yet undetermined cytochrome P450 monooxygenase (called ifgH) then leads to the formation of isofumigaclavine B which is in turn acetylated by ifgI to isofumigaclavine A. Penicillium roqueforti has interestingly at least two sets of genes for the consumption of chanoclavine-I aldehyde on three different loci, the OYEs ifgG/fgaOx3 and the festuclavine synthase homologs ifgF1/ifgF2. The reason for the duplication of these genes is unclear, probably to ensure the conversion of chanoclavine-I aldehyde by differential gene expression under various environmental conditions. The sequence is that of 4-dimethylallyltryptophan N-methyltransferase ifgB from Penicillium roqueforti (strain FM164).